Consider the following 290-residue polypeptide: Signal peptidase I (290 aa).

Residues 1–13 lie on the Cytoplasmic side of the membrane; that stretch reads MKFLRSVYAFCSS. Residues 14–34 traverse the membrane as a helical segment; sequence WVGTIIIVLLVIFFIAQAFII. The Extracellular portion of the chain corresponds to 35–290; that stretch reads PSRSMVGTLY…KIIKKEKATH (256 aa). Catalysis depends on residues serine 38 and lysine 106.

This sequence belongs to the peptidase S26 family.

Its subcellular location is the cell membrane. The catalysed reaction is Cleavage of hydrophobic, N-terminal signal or leader sequences from secreted and periplasmic proteins.. The sequence is that of Signal peptidase I (lepB) from Helicobacter pylori (strain J99 / ATCC 700824) (Campylobacter pylori J99).